The following is a 260-amino-acid chain: Large ribosomal subunit protein uL2y (260 aa).

The segment at 227–248 (RRDKSAGAKVGQIAARRTGRRR) is disordered.

The protein belongs to the universal ribosomal protein uL2 family.

The protein is Large ribosomal subunit protein uL2y (RPL8B) of Arabidopsis thaliana (Mouse-ear cress).